A 102-amino-acid polypeptide reads, in one-letter code: Small ribosomal subunit protein uS10 (102 aa).

The interval 35 to 58 (SGPIPLPTKTLEIPSRKSPDGEGT) is disordered.

The protein belongs to the universal ribosomal protein uS10 family. In terms of assembly, part of the 30S ribosomal subunit.

Involved in the binding of tRNA to the ribosomes. This Halorubrum lacusprofundi (strain ATCC 49239 / DSM 5036 / JCM 8891 / ACAM 34) protein is Small ribosomal subunit protein uS10.